Here is a 556-residue protein sequence, read N- to C-terminus: Chaperone protein HscC (556 aa).

It belongs to the heat shock protein 70 family.

Functionally, probable chaperone. Has ATPase activity. Not stimulated by DnaJ. The chain is Chaperone protein HscC (hscC) from Escherichia coli (strain K12).